A 264-amino-acid polypeptide reads, in one-letter code: 3-methyl-2-oxobutanoate hydroxymethyltransferase (264 aa).

Mg(2+) contacts are provided by Asp-41 and Asp-80. Residues 41–42 (DS), Asp-80, and Lys-109 contribute to the 3-methyl-2-oxobutanoate site. Residue Glu-111 participates in Mg(2+) binding. The active-site Proton acceptor is the Glu-178.

This sequence belongs to the PanB family. As to quaternary structure, homodecamer; pentamer of dimers. It depends on Mg(2+) as a cofactor.

The protein localises to the cytoplasm. The catalysed reaction is 3-methyl-2-oxobutanoate + (6R)-5,10-methylene-5,6,7,8-tetrahydrofolate + H2O = 2-dehydropantoate + (6S)-5,6,7,8-tetrahydrofolate. It functions in the pathway cofactor biosynthesis; (R)-pantothenate biosynthesis; (R)-pantoate from 3-methyl-2-oxobutanoate: step 1/2. In terms of biological role, catalyzes the reversible reaction in which hydroxymethyl group from 5,10-methylenetetrahydrofolate is transferred onto alpha-ketoisovalerate to form ketopantoate. The protein is 3-methyl-2-oxobutanoate hydroxymethyltransferase of Thermosipho melanesiensis (strain DSM 12029 / CIP 104789 / BI429).